A 449-amino-acid polypeptide reads, in one-letter code: Elongation factor 1-alpha (449 aa).

The tr-type G domain occupies 5 to 234 (KQHVSIVVIG…DNCDPPKRPV (230 aa)). A G1 region spans residues 14-21 (GHVDSGKS). 14-21 (GHVDSGKS) lines the GTP pocket. Lysine 55 carries the N6,N6-dimethyllysine modification. The segment at 70–74 (GITID) is G2. Residue lysine 79 is modified to N6,N6,N6-trimethyllysine. Residues 91-94 (DAPG) form a G3 region. GTP-binding positions include 91-95 (DAPGH) and 153-156 (NKMD). Residues 153–156 (NKMD) are G4. Lysine 187 is subject to N6,N6,N6-trimethyllysine. A G5 region spans residues 194-196 (SGW). Lysine 265 is modified (N6-methyllysine). N6,N6,N6-trimethyllysine occurs at positions 310 and 400.

This sequence belongs to the TRAFAC class translation factor GTPase superfamily. Classic translation factor GTPase family. EF-Tu/EF-1A subfamily.

Its subcellular location is the cytoplasm. Functionally, this protein promotes the GTP-dependent binding of aminoacyl-tRNA to the A-site of ribosomes during protein biosynthesis. The protein is Elongation factor 1-alpha of Pyropia yezoensis (Susabi-nori).